The primary structure comprises 317 residues: tRNA-dihydrouridine(16) synthase (317 aa).

FMN-binding positions include 7–9 (PME) and Q68. The active-site Proton donor is the C98. FMN is bound by residues K139, 199-201 (NGE), and 223-224 (GR).

The protein belongs to the Dus family. DusC subfamily. Requires FMN as cofactor.

The enzyme catalyses 5,6-dihydrouridine(16) in tRNA + NADP(+) = uridine(16) in tRNA + NADPH + H(+). It catalyses the reaction 5,6-dihydrouridine(16) in tRNA + NAD(+) = uridine(16) in tRNA + NADH + H(+). Its function is as follows. Catalyzes the synthesis of 5,6-dihydrouridine (D), a modified base found in the D-loop of most tRNAs, via the reduction of the C5-C6 double bond in target uridines. Specifically modifies U16 in tRNAs. The chain is tRNA-dihydrouridine(16) synthase from Pseudomonas syringae pv. tomato (strain ATCC BAA-871 / DC3000).